A 132-amino-acid chain; its full sequence is Interleukin-13 (132 aa).

Residues 1-18 (MALLLTMVIALTCLGGFA) form the signal peptide. Asn38, Asn49, Asn57, and Asn72 each carry an N-linked (GlcNAc...) asparagine glycan. Cystine bridges form between Cys48–Cys76 and Cys64–Cys90.

It belongs to the IL-4/IL-13 family. In terms of assembly, interacts with IL13RA2.

The protein localises to the secreted. Its function is as follows. Cytokine that plays important roles in allergic inflammation and immune response to parasite infection. Synergizes with IL2 in regulating interferon-gamma synthesis. Stimulates B-cell proliferation, and activation of eosinophils, basophils, and mast cells. Plays an important role in controlling IL33 activity by modulating the production of transmembrane and soluble forms of interleukin-1 receptor-like 1/IL1RL1. Displays the capacity to antagonize Th1-driven proinflammatory immune response and downregulates synthesis of many proinflammatory cytokines including IL1, IL6, IL10, IL12 and TNF-alpha through a mechanism that partially involves suppression of NF-kappa-B. Also functions on nonhematopoietic cells, including endothelial cells where it induces vascular cell adhesion protein 1/VCAM1, which is important in the recruitment of eosinophils. Exerts its biological effects through its receptors which comprises the IL4R chain and the IL13RA1 chain, to activate JAK1 and TYK2, leading to the activation of STAT6. Aside from IL13RA1, another receptor IL13RA2 acts as a high affinity decoy for IL13 and mediates internalization and depletion of extracellular IL13. The chain is Interleukin-13 (IL13) from Macaca thibetana (Pere David's macaque).